Consider the following 425-residue polypeptide: Serine--tRNA ligase (425 aa).

231-233 (TAE) contacts L-serine. 262-264 (RRE) lines the ATP pocket. Glu-285 serves as a coordination point for L-serine. Position 349-352 (349-352 (EISS)) interacts with ATP. Residue Ser-385 coordinates L-serine.

Belongs to the class-II aminoacyl-tRNA synthetase family. Type-1 seryl-tRNA synthetase subfamily. Homodimer. The tRNA molecule binds across the dimer.

It localises to the cytoplasm. It carries out the reaction tRNA(Ser) + L-serine + ATP = L-seryl-tRNA(Ser) + AMP + diphosphate + H(+). The enzyme catalyses tRNA(Sec) + L-serine + ATP = L-seryl-tRNA(Sec) + AMP + diphosphate + H(+). It participates in aminoacyl-tRNA biosynthesis; selenocysteinyl-tRNA(Sec) biosynthesis; L-seryl-tRNA(Sec) from L-serine and tRNA(Sec): step 1/1. Catalyzes the attachment of serine to tRNA(Ser). Is also able to aminoacylate tRNA(Sec) with serine, to form the misacylated tRNA L-seryl-tRNA(Sec), which will be further converted into selenocysteinyl-tRNA(Sec). This is Serine--tRNA ligase from Aquifex aeolicus (strain VF5).